Reading from the N-terminus, the 166-residue chain is Cofilin-1 (166 aa).

Alanine 2 is subject to N-acetylalanine. Phosphoserine is present on residues serine 3 and serine 8. The ADF-H domain maps to 4-153; it reads GVAVSDGVIK…KDRCTLAEKL (150 aa). N6-acetyllysine is present on lysine 13. A Phosphothreonine modification is found at threonine 25. Residues 30–34 carry the Nuclear localization signal motif; it reads KKRKK. Serine 41 carries the phosphoserine modification. The residue at position 68 (tyrosine 68) is a Phosphotyrosine. At lysine 73 the chain carries N6-acetyllysine. Lysine 132 is covalently cross-linked (Glycyl lysine isopeptide (Lys-Gly) (interchain with G-Cter in SUMO2)). Residue tyrosine 140 is modified to Phosphotyrosine. Lysine 144 is subject to N6-acetyllysine. Serine 156 carries the post-translational modification Phosphoserine.

Belongs to the actin-binding proteins ADF family. In terms of assembly, can bind G- and F-actin in a 1:1 ratio of cofilin to actin. It is a major component of intranuclear and cytoplasmic actin rods. Interacts with the subcortical maternal complex (SCMC) via interaction with TLE6 and NLRP5. Interacts with C9orf72. Post-translationally, inactivated by phosphorylation on Ser-3. Phosphorylated on Ser-3 in resting cells. Dephosphorylated by PDXP/chronophin; this restores its activity in promoting actin filament depolymerization. The phosphorylation of Ser-24 may prevent recognition of the nuclear localization signal. Phosphorylated via a ARRB1-RAC1-LIMK1-PAK1 cascade upon active ligand stimulation of atypical chemokine receptor ACKR2.

It localises to the nucleus matrix. Its subcellular location is the cytoplasm. The protein localises to the cytoskeleton. It is found in the cell projection. The protein resides in the ruffle membrane. It localises to the lamellipodium membrane. Its subcellular location is the lamellipodium. The protein localises to the growth cone. It is found in the axon. Binds to F-actin and exhibits pH-sensitive F-actin depolymerizing activity. Important for normal progress through mitosis and normal cytokinesis. In conjunction with the subcortical maternal complex (SCMC), plays an essential role for zygotes to progress beyond the first embryonic cell divisions via regulation of actin dynamics. Required for the centralization of the mitotic spindle and symmetric division of zygotes. Plays a role in the regulation of cell morphology and cytoskeletal organization in epithelial cells. Required for the up-regulation of atypical chemokine receptor ACKR2 from endosomal compartment to cell membrane, increasing its efficiency in chemokine uptake and degradation. Required for neural tube morphogenesis and neural crest cell migration. This Bos taurus (Bovine) protein is Cofilin-1 (CFL1).